Here is a 265-residue protein sequence, read N- to C-terminus: MNTYAQESKLRLKTKIGADGRCVIEDNFFTPPFKLMAPFYPKDDLAEIMLLAVSPGLMKGDAQDMQLNIGPNCKLRITSQSFEKIHNTEDGFASRDMHIVVGENAFLDFAPFPLIPFENAHFKGNTTISLRSSSQLLYSEIIVAGRVARNELFKFNRLHTKISILQDEKPIYYDNTILDPKTTNMNNMCMFDGYTHYLNLVLVNCPIELSGARELIEESEGVDGAVSKIASSHLCLKALAKGSEPLLHLREKIARLVTQTTTQKV.

It belongs to the UreD family. UreH, UreF and UreG form a complex that acts as a GTP-hydrolysis-dependent molecular chaperone, activating the urease apoprotein by helping to assemble the nickel containing metallocenter of UreC. The UreE protein probably delivers the nickel.

The protein localises to the cytoplasm. Functionally, required for maturation of urease via the functional incorporation of the urease nickel metallocenter. The protein is Urease accessory protein UreH of Helicobacter pylori (strain J99 / ATCC 700824) (Campylobacter pylori J99).